The chain runs to 138 residues: Pleckstrin homology-like domain family A member 2 (138 aa).

The PH domain maps to 11 to 105 (VLKEGELEKR…WNAVITMALI (95 aa)). The tract at residues 117–138 (KTRQDDESGSPGQHESRMARAP) is disordered.

Belongs to the PHLDA2 family.

Its subcellular location is the cytoplasm. The protein localises to the membrane. Plays a role in regulating placenta growth. May act via its PH domain that competes with other PH domain-containing proteins, thereby preventing their binding to membrane lipids. The polypeptide is Pleckstrin homology-like domain family A member 2 (phlda2) (Salmo salar (Atlantic salmon)).